We begin with the raw amino-acid sequence, 268 residues long: Ubiquinone biosynthesis protein COQ4 homolog 1, mitochondrial (268 aa).

A compositionally biased stretch (basic residues) spans 1–10 (MFLRRVHPVR). The N-terminal 18 residues, 1-18 (MFLRRVHPVRLGHASQRS), are a transit peptide targeting the mitochondrion. The segment at 1–44 (MFLRRVHPVRLGHASQRSLTTTKSRNESTTTTVEAPQAAPSPPP) is disordered. Residues 20–38 (TTTKSRNESTTTTVEAPQA) show a composition bias toward low complexity. Zn(2+) is bound by residues His-177, Asp-178, His-181, and Glu-193.

This sequence belongs to the COQ4 family. As to quaternary structure, component of a multi-subunit COQ enzyme complex. It depends on Zn(2+) as a cofactor.

It localises to the mitochondrion inner membrane. It catalyses the reaction a 4-hydroxy-3-methoxy-5-(all-trans-polyprenyl)benzoate + H(+) = a 2-methoxy-6-(all-trans-polyprenyl)phenol + CO2. Its pathway is cofactor biosynthesis; ubiquinone biosynthesis. Lyase that catalyzes the C1-decarboxylation of 4-hydroxy-3-methoxy-5-(all-trans-polyprenyl)benzoic acid into 2-methoxy-6-(all-trans-polyprenyl)phenol during ubiquinone biosynthesis. The polypeptide is Ubiquinone biosynthesis protein COQ4 homolog 1, mitochondrial (Culex quinquefasciatus (Southern house mosquito)).